The chain runs to 476 residues: Eukaryotic translation initiation factor 3 subunit L (476 aa).

Residues 257–452 (DAIRMFSHIL…DLDYALENDL (196 aa)) form the PCI domain.

It belongs to the eIF-3 subunit L family. Component of the eukaryotic translation initiation factor 3 (eIF-3) complex.

The protein resides in the cytoplasm. Its function is as follows. Component of the eukaryotic translation initiation factor 3 (eIF-3) complex, which is involved in protein synthesis of a specialized repertoire of mRNAs and, together with other initiation factors, stimulates binding of mRNA and methionyl-tRNAi to the 40S ribosome. The eIF-3 complex specifically targets and initiates translation of a subset of mRNAs involved in cell proliferation. This chain is Eukaryotic translation initiation factor 3 subunit L, found in Aspergillus niger (strain ATCC MYA-4892 / CBS 513.88 / FGSC A1513).